Consider the following 520-residue polypeptide: Cytosol aminopeptidase (520 aa).

Lys-286 and Asp-291 together coordinate Zn(2+). The active site involves Lys-298. Residues Asp-309, Asp-368, and Glu-370 each contribute to the Zn(2+) site. The active site involves Arg-372.

The protein belongs to the peptidase M17 family. Homohexamer. The cofactor is Zn(2+).

The protein resides in the cytoplasm. It catalyses the reaction Release of an N-terminal amino acid, Xaa-|-Yaa-, in which Xaa is preferably Leu, but may be other amino acids including Pro although not Arg or Lys, and Yaa may be Pro. Amino acid amides and methyl esters are also readily hydrolyzed, but rates on arylamides are exceedingly low.. It carries out the reaction Release of N-terminal proline from a peptide.. Its function is as follows. Presumably involved in the processing and regular turnover of intracellular proteins. Catalyzes the removal of unsubstituted N-terminal amino acids from various peptides. The polypeptide is Cytosol aminopeptidase (lap) (Dictyostelium discoideum (Social amoeba)).